The primary structure comprises 147 residues: Nucleoside diphosphate kinase (147 aa).

Residues K9, F57, R85, T91, R102, and N112 each coordinate ATP. Catalysis depends on H115, which acts as the Pros-phosphohistidine intermediate.

This sequence belongs to the NDK family. In terms of assembly, homotetramer. Mg(2+) is required as a cofactor.

The protein resides in the cytoplasm. The enzyme catalyses a 2'-deoxyribonucleoside 5'-diphosphate + ATP = a 2'-deoxyribonucleoside 5'-triphosphate + ADP. It catalyses the reaction a ribonucleoside 5'-diphosphate + ATP = a ribonucleoside 5'-triphosphate + ADP. Its function is as follows. Major role in the synthesis of nucleoside triphosphates other than ATP. The ATP gamma phosphate is transferred to the NDP beta phosphate via a ping-pong mechanism, using a phosphorylated active-site intermediate. In Listeria innocua serovar 6a (strain ATCC BAA-680 / CLIP 11262), this protein is Nucleoside diphosphate kinase.